The following is a 255-amino-acid chain: MERSSSYGVEKLQKRCYHEWMSLQTKHIDDLKEALMCQRNNDDKLEDLVGKIVNDYHTYAGKRSELSYRCCAHYFAPSWNTPIENSMLWMGGCRPSSFIRLIYALCGSQAETQLSQYLLKIDDDFDINHGGFMSDLTATQLGKLNDLHLEVIKKEDKITKTSANFQDDVADLPIADVVHADVAVEDALDKHEEGMAVLLAEADKLRFETLRKIVDVVTPLQAVEFLLAGKRLQLSLHDRGRVRADVCGGVGGAAV.

A DOG1 domain is found at 10-246 (EKLQKRCYHE…HDRGRVRADV (237 aa)).

The polypeptide is Protein DOG1-like 2 (Arabidopsis thaliana (Mouse-ear cress)).